A 553-amino-acid chain; its full sequence is Glycerol-3-phosphate dehydrogenase (553 aa).

An FAD-binding site is contributed by 13–41; sequence DLIVIGGGINGVGTARDGALRGLKTLLIE.

This sequence belongs to the FAD-dependent glycerol-3-phosphate dehydrogenase family. FAD serves as cofactor.

The protein resides in the cytoplasm. It catalyses the reaction a quinone + sn-glycerol 3-phosphate = dihydroxyacetone phosphate + a quinol. The sequence is that of Glycerol-3-phosphate dehydrogenase (glpD) from Synechocystis sp. (strain ATCC 27184 / PCC 6803 / Kazusa).